We begin with the raw amino-acid sequence, 198 residues long: FMN-dependent NADH:quinone oxidoreductase 2 (198 aa).

Residue 136-139 (SRGG) participates in FMN binding.

The protein belongs to the azoreductase type 1 family. As to quaternary structure, homodimer. FMN serves as cofactor.

The enzyme catalyses 2 a quinone + NADH + H(+) = 2 a 1,4-benzosemiquinone + NAD(+). It catalyses the reaction N,N-dimethyl-1,4-phenylenediamine + anthranilate + 2 NAD(+) = 2-(4-dimethylaminophenyl)diazenylbenzoate + 2 NADH + 2 H(+). In terms of biological role, quinone reductase that provides resistance to thiol-specific stress caused by electrophilic quinones. Its function is as follows. Also exhibits azoreductase activity. Catalyzes the reductive cleavage of the azo bond in aromatic azo compounds to the corresponding amines. This is FMN-dependent NADH:quinone oxidoreductase 2 from Clostridium perfringens (strain 13 / Type A).